The chain runs to 377 residues: Erythronate-4-phosphate dehydrogenase (377 aa).

Ser45 and Thr67 together coordinate substrate. NAD(+)-binding positions include 127–128, Asp147, and Thr176; that span reads QV. Arg209 is a catalytic residue. Asp233 is a binding site for NAD(+). Glu238 is a catalytic residue. His255 functions as the Proton donor in the catalytic mechanism. An NAD(+)-binding site is contributed by Gly258. Tyr259 serves as a coordination point for substrate.

The protein belongs to the D-isomer specific 2-hydroxyacid dehydrogenase family. PdxB subfamily. Homodimer.

The protein localises to the cytoplasm. It catalyses the reaction 4-phospho-D-erythronate + NAD(+) = (R)-3-hydroxy-2-oxo-4-phosphooxybutanoate + NADH + H(+). Its pathway is cofactor biosynthesis; pyridoxine 5'-phosphate biosynthesis; pyridoxine 5'-phosphate from D-erythrose 4-phosphate: step 2/5. In terms of biological role, catalyzes the oxidation of erythronate-4-phosphate to 3-hydroxy-2-oxo-4-phosphonooxybutanoate. The sequence is that of Erythronate-4-phosphate dehydrogenase from Vibrio vulnificus (strain YJ016).